Reading from the N-terminus, the 151-residue chain is 3-dehydroquinate dehydratase (151 aa).

Residue tyrosine 24 is the Proton acceptor of the active site. Residues asparagine 76, histidine 82, and aspartate 89 each contribute to the substrate site. Histidine 102 (proton donor) is an active-site residue. Substrate-binding positions include 103–104 (LS) and arginine 113.

Belongs to the type-II 3-dehydroquinase family. As to quaternary structure, homododecamer.

It catalyses the reaction 3-dehydroquinate = 3-dehydroshikimate + H2O. Its pathway is metabolic intermediate biosynthesis; chorismate biosynthesis; chorismate from D-erythrose 4-phosphate and phosphoenolpyruvate: step 3/7. In terms of biological role, catalyzes a trans-dehydration via an enolate intermediate. The sequence is that of 3-dehydroquinate dehydratase from Acinetobacter baumannii (strain ATCC 17978 / DSM 105126 / CIP 53.77 / LMG 1025 / NCDC KC755 / 5377).